A 274-amino-acid chain; its full sequence is 2,3,4,5-tetrahydropyridine-2,6-dicarboxylate N-succinyltransferase (274 aa).

Positions 104 and 141 each coordinate substrate.

It belongs to the transferase hexapeptide repeat family. In terms of assembly, homotrimer.

Its subcellular location is the cytoplasm. It catalyses the reaction (S)-2,3,4,5-tetrahydrodipicolinate + succinyl-CoA + H2O = (S)-2-succinylamino-6-oxoheptanedioate + CoA. It participates in amino-acid biosynthesis; L-lysine biosynthesis via DAP pathway; LL-2,6-diaminopimelate from (S)-tetrahydrodipicolinate (succinylase route): step 1/3. This Shewanella putrefaciens (strain CN-32 / ATCC BAA-453) protein is 2,3,4,5-tetrahydropyridine-2,6-dicarboxylate N-succinyltransferase.